Consider the following 1402-residue polypeptide: DNA-directed RNA polymerase subunit beta' (1402 aa).

4 residues coordinate Zn(2+): Cys70, Cys72, Cys85, and Cys88. Residues Asp460, Asp462, and Asp464 each coordinate Mg(2+). Residues Cys812, Cys886, Cys893, and Cys896 each coordinate Zn(2+). Residues 1373 to 1402 (DRFLNGSASSNEKSRSAGVLEATDEESAGD) form a disordered region.

Belongs to the RNA polymerase beta' chain family. As to quaternary structure, the RNAP catalytic core consists of 2 alpha, 1 beta, 1 beta' and 1 omega subunit. When a sigma factor is associated with the core the holoenzyme is formed, which can initiate transcription. Requires Mg(2+) as cofactor. It depends on Zn(2+) as a cofactor.

It carries out the reaction RNA(n) + a ribonucleoside 5'-triphosphate = RNA(n+1) + diphosphate. Its function is as follows. DNA-dependent RNA polymerase catalyzes the transcription of DNA into RNA using the four ribonucleoside triphosphates as substrates. This Dichelobacter nodosus (strain VCS1703A) protein is DNA-directed RNA polymerase subunit beta'.